The following is a 126-amino-acid chain: Small ribosomal subunit protein uS12 (126 aa).

The tract at residues 1–29 (MPTIQQLIRQPRAPKKRRSKSPALQKCPQ) is disordered. Residue Asp-89 is modified to 3-methylthioaspartic acid.

It belongs to the universal ribosomal protein uS12 family. Part of the 30S ribosomal subunit. Contacts proteins S8 and S17. May interact with IF1 in the 30S initiation complex.

Its function is as follows. With S4 and S5 plays an important role in translational accuracy. In terms of biological role, interacts with and stabilizes bases of the 16S rRNA that are involved in tRNA selection in the A site and with the mRNA backbone. Located at the interface of the 30S and 50S subunits, it traverses the body of the 30S subunit contacting proteins on the other side and probably holding the rRNA structure together. The combined cluster of proteins S8, S12 and S17 appears to hold together the shoulder and platform of the 30S subunit. This chain is Small ribosomal subunit protein uS12, found in Protochlamydia amoebophila (strain UWE25).